The primary structure comprises 732 residues: Catalase-peroxidase (732 aa).

Residues 1-26 are disordered; that stretch reads MADNKKSPETGGITMQIPGKGRTNRD. Positions 96-219 form a cross-link, tryptophyl-tyrosyl-methioninium (Trp-Tyr) (with M-245); it reads WHSAGTYRTF…LAAVQMGLIY (124 aa). The active-site Proton acceptor is His-97. Residues 219–245 constitute a cross-link (tryptophyl-tyrosyl-methioninium (Tyr-Met) (with W-96)); the sequence is YVNPEGPDGNPDPVAAARDIREVFARM. His-260 lines the heme b pocket. The disordered stretch occupies residues 344-365; the sequence is KPKGEAGAGTVPDPHDPKKRHA.

It belongs to the peroxidase family. Peroxidase/catalase subfamily. In terms of assembly, homodimer or homotetramer. Requires heme b as cofactor. Formation of the three residue Trp-Tyr-Met cross-link is important for the catalase, but not the peroxidase activity of the enzyme.

The catalysed reaction is H2O2 + AH2 = A + 2 H2O. It catalyses the reaction 2 H2O2 = O2 + 2 H2O. Functionally, bifunctional enzyme with both catalase and broad-spectrum peroxidase activity. The chain is Catalase-peroxidase from Methanospirillum hungatei JF-1 (strain ATCC 27890 / DSM 864 / NBRC 100397 / JF-1).